The chain runs to 768 residues: Cullin-3 (768 aa).

An N-acetylserine modification is found at Ser-2. An interaction with KLHL18 region spans residues 2 to 41 (SNLSKGTGSRKDTKMRIRAFPMTMDEKYVNSIWDLLKNAI). At Ser-585 the chain carries Phosphoserine. Positions 677–698 (VAAKQGESDPERKETRQKVDDD) are disordered. The segment covering 682–698 (GESDPERKETRQKVDDD) has biased composition (basic and acidic residues). Positions 698 to 760 (DRKHEIEAAI…REYLARTPED (63 aa)) constitute a Cullin neddylation domain. A Glycyl lysine isopeptide (Lys-Gly) (interchain with G-Cter in NEDD8) cross-link involves residue Lys-712.

It belongs to the cullin family. Forms neddylation-dependent homodimers. Component of multiple BCR (BTB-CUL3-RBX1) E3 ubiquitin-protein ligase complexes formed of CUL3, RBX1 and a variable BTB domain-containing protein acting as both, adapter to cullin and substrate recognition subunit. The BCR complex may be active as a heterodimeric complex, in which NEDD8, covalently attached to one CUL3 molecule, binds to the C-terminus of a second CUL3 molecule. Interacts with RBX1, RNF7, CYCE and TIP120A/CAND1. Part of the BCR(SPOP) containing SPOP, and of BCR containing homodimeric SPOPL or the heterodimer formed by SPOP and SPOPL. Part of the probable BCR(KLHL9-KLHL13) complex with BTB domain proteins KLHL9 and KLHL13. Part of the BCR(KLHL41) complex containing KLHL41. Component of the BCR(KLHL12) E3 ubiquitin ligase complex, at least composed of CUL3 and KLHL12 and RBX1. Component of the BCR(KLHL3) E3 ubiquitin ligase complex, at least composed of CUL3 and KLHL3 and RBX1. Part of the BCR(ENC1) complex containing ENC1. Part of a complex consisting of BMI1/PCGF4, CUL3 and SPOP. Part of a complex consisting of BRMS1, CUL3 and SPOP. Component of the BCR(KLHL21) E3 ubiquitin ligase complex, at least composed of CUL3, KLHL21 and RBX1. Component of the BCR(KLHL22) E3 ubiquitin ligase complex, at least composed of CUL3, KLHL22 and RBX1. Component of the BCR(KLHL25) E3 ubiquitin ligase complex, at least composed of CUL3, KLHL25 and RBX1. Part of a complex consisting of MACROH2A1, CUL3 and SPOP. Component of the BCR(KLHL42) E3 ubiquitin ligase complex, at least composed of CUL3 and KLHL42. Interacts with KLHL42 (via the BTB domain). Interacts with KATNA1; the interaction is enhanced by KLHL42. Component of the BCR(KBTBD8) E3 ubiquitin ligase complex, at least composed of CUL3, KBTBD8 and RBX1. Interacts with KCTD5, KLHL9, KLHL11, KLHL13, GAN, ZBTB16, KLHL3, KLHL15, KLHL20, KLHL36, GMCL2, BTBD1. Part of a complex that contains CUL3, RBX1 and GAN. Interacts (via BTB domain) with KLHL17; the interaction regulates surface GRIK2 expression. Interacts with KCTD7. Part of the BCR(GAN) complex containing GAN. Part of the BCR(KEAP1) complex containing KEAP1. Interacts with KLHL10. Interacts with KAT5 and ATF2. Interacts with KCTD17 in the BCR(KCTD17) E3 ubiquitin ligase complex, at least composed of CUL3, KCTD17 and RBX1. Interacts (when neddylated) with ARIH1; leading to activate the E3 ligase activity of ARIH1. Interacts with COPS9 isoform 2. Interacts with PPP2R5B; this interaction is indirect and mediated through KLHL15-binding and leads to PPP2R5B proteasomal degradation. Interacts with RBBP8/CtIP; this interaction is indirect and mediated through KLHL15-binding and leads to RBBP8 proteasomal degradation. Interacts with KLHL24 in the BCR(KLHL24) E3 ubiquitin ligase complex, composed of CUL3, RBX1 and KLHL24. Interacts with RHOBTB2. Interacts with AURKA and KLHL18 (via BTB domain). Interacts (unneddylated form) with DCUN1D1, DCUN1D2, DCUN1D3, DCUN1D4 and DCUN1D5; these interactions promote the cullin neddylation. Component of a BCR3 (BTB-CUL3-RBX1) E3 ubiquitin ligase complex, also named Cul3-RING ubiquitin ligase complex CUL3(KBTBD6/7), composed of CUL3, RBX1, KBTBD6 and KBTBD7. Component of the BCR(KBTBD2) E3 ubiquitin ligase complex, at least composed of CUL3, KBTBD2 and RBX1. Interacts with KBTBD2 (via the BTB domain). Component of the BCR(KBTBD4) E3 ubiquitin ligase complex, at least composed of CUL3, KBTBD4 and RBX1. Component of the BCR(ARMC5) E3 ubiquitin ligase complex, composed of CUL3, ARMC5 and RBX1. Post-translationally, neddylated. Attachment of NEDD8 is required for the E3 ubiquitin-protein ligase activity of the BCR complex. Deneddylated via its interaction with the COP9 signalosome (CSN) complex. In terms of tissue distribution, brain, spermatozoa, and testis (at protein level). Widely expressed.

Its subcellular location is the nucleus. The protein resides in the golgi apparatus. The protein localises to the cell projection. It localises to the cilium. It is found in the flagellum. Its subcellular location is the cytoplasm. The protein resides in the cytoskeleton. The protein localises to the spindle. It localises to the microtubule organizing center. It is found in the centrosome. Its subcellular location is the spindle pole. Its pathway is protein modification; protein ubiquitination. In terms of biological role, core component of multiple cullin-RING-based BCR (BTB-CUL3-RBX1) E3 ubiquitin-protein ligase complexes which mediate the ubiquitination and subsequent proteasomal degradation of target proteins. BCR complexes and ARIH1 collaborate in tandem to mediate ubiquitination of target proteins. As a scaffold protein may contribute to catalysis through positioning of the substrate and the ubiquitin-conjugating enzyme. The E3 ubiquitin-protein ligase activity of the complex is dependent on the neddylation of the cullin subunit and is inhibited by the association of the deneddylated cullin subunit with TIP120A/CAND1. The functional specificity of the BCR complex depends on the BTB domain-containing protein as the substrate recognition component. BCR(KLHL42) is involved in ubiquitination of KATNA1. BCR(SPOP) is involved in ubiquitination of BMI1/PCGF4, BRMS1, MACROH2A1 and DAXX, GLI2 and GLI3. Can also form a cullin-RING-based BCR (BTB-CUL3-RBX1) E3 ubiquitin-protein ligase complex containing homodimeric SPOPL or the heterodimer formed by SPOP and SPOPL; these complexes have lower ubiquitin ligase activity. BCR(KLHL9-KLHL13) controls the dynamic behavior of AURKB on mitotic chromosomes and thereby coordinates faithful mitotic progression and completion of cytokinesis. BCR(KLHL12) is involved in ER-Golgi transport by regulating the size of COPII coats, thereby playing a key role in collagen export, which is required for embryonic stem (ES) cells division: BCR(KLHL12) acts by mediating monoubiquitination of SEC31 (SEC31A or SEC31B). BCR(KLHL3) acts as a regulator of ion transport in the distal nephron; by mediating ubiquitination of WNK4. The BCR(KLHL20) E3 ubiquitin ligase complex is involved in interferon response and anterograde Golgi to endosome transport: it mediates both ubiquitination leading to degradation and 'Lys-33'-linked ubiquitination. The BCR(KLHL21) E3 ubiquitin ligase complex regulates localization of the chromosomal passenger complex (CPC) from chromosomes to the spindle midzone in anaphase and mediates the ubiquitination of AURKB. The BCR(KLHL22) ubiquitin ligase complex mediates monoubiquitination of PLK1, leading to PLK1 dissociation from phosphoreceptor proteins and subsequent removal from kinetochores, allowing silencing of the spindle assembly checkpoint (SAC) and chromosome segregation. The BCR(KLHL22) ubiquitin ligase complex is also responsible for the amino acid-stimulated 'Lys-48' polyubiquitination and proteasomal degradation of DEPDC5. Through the degradation of DEPDC5, releases the GATOR1 complex-mediated inhibition of the TORC1 pathway. The BCR(KLHL25) ubiquitin ligase complex is involved in translational homeostasis by mediating ubiquitination and subsequent degradation of hypophosphorylated EIF4EBP1 (4E-BP1). The BCR(KLHL25) ubiquitin ligase complex is also involved in lipid synthesis by mediating ubiquitination and degradation of ACLY. The BCR(KBTBD8) complex acts by mediating monoubiquitination of NOLC1 and TCOF1, leading to remodel the translational program of differentiating cells in favor of neural crest specification. Involved in ubiquitination of cyclin E and of cyclin D1 (in vitro) thus involved in regulation of G1/S transition. Involved in the ubiquitination of KEAP1, ENC1 and KLHL41. In concert with ATF2 and RBX1, promotes degradation of KAT5 thereby attenuating its ability to acetylate and activate ATM. The BCR(KCTD17) E3 ubiquitin ligase complex mediates ubiquitination and degradation of TCHP, a down-regulator of cilium assembly, thereby inducing ciliogenesis. The BCR(KLHL24) E3 ubiquitin ligase complex mediates ubiquitination of KRT14, controls KRT14 levels during keratinocytes differentiation, and is essential for skin integrity. The BCR(KLHL18) E3 ubiquitin ligase complex mediates the ubiquitination of AURKA leading to its activation at the centrosome which is required for initiating mitotic entry. The BCR(KEAP1) E3 ubiquitin ligase complex acts as a key sensor of oxidative and electrophilic stress by mediating ubiquitination and degradation of NFE2L2/NRF2, a transcription factor regulating expression of many cytoprotective genes. As part of the CUL3(KBTBD6/7) E3 ubiquitin ligase complex functions mediates 'Lys-48' ubiquitination and proteasomal degradation of TIAM1. By controlling the ubiquitination of that RAC1 guanine exchange factors (GEF), regulates RAC1 signal transduction and downstream biological processes including the organization of the cytoskeleton, cell migration and cell proliferation. The BCR(KBTBD4) E3 ubiquitin ligase complex targets CoREST corepressor complex components RCOR1, KDM1A/LSD1 and HDAC2 for proteasomal degradation with RCOR1 likely to be the primary target while degradation of KDM1A and HDAC2 is likely due to their association with RCOR1. It also targets RCOR3, MIER2 and MIER3 for proteasomal degradation as well as associated proteins ZNF217 and RREB1 with degradation being dependent on the presence of an ELM2 domain in the target proteins. The BCR(ARMC5) complex mediates premature transcription termination of transcripts that are unfavorably configured for transcriptional elongation by mediating ubiquitination of Pol II subunit POLR2A. Required for 'Lys-63'-linked ubiquitination of large ribosomal subunit protein MRPL12. The polypeptide is Cullin-3 (Homo sapiens (Human)).